A 180-amino-acid polypeptide reads, in one-letter code: ATP synthase subunit delta, chloroplastic (180 aa).

This sequence belongs to the ATPase delta chain family. In terms of assembly, F-type ATPases have 2 components, F(1) - the catalytic core - and F(0) - the membrane proton channel. F(1) has five subunits: alpha(3), beta(3), gamma(1), delta(1), epsilon(1). CF(0) has four main subunits: a(1), b(1), b'(1) and c(10-14). The alpha and beta chains form an alternating ring which encloses part of the gamma chain. F(1) is attached to F(0) by a central stalk formed by the gamma and epsilon chains, while a peripheral stalk is formed by the delta, b and b' chains.

The protein resides in the plastid. Its subcellular location is the chloroplast thylakoid membrane. Functionally, f(1)F(0) ATP synthase produces ATP from ADP in the presence of a proton or sodium gradient. F-type ATPases consist of two structural domains, F(1) containing the extramembraneous catalytic core and F(0) containing the membrane proton channel, linked together by a central stalk and a peripheral stalk. During catalysis, ATP synthesis in the catalytic domain of F(1) is coupled via a rotary mechanism of the central stalk subunits to proton translocation. In terms of biological role, this protein is part of the stalk that links CF(0) to CF(1). It either transmits conformational changes from CF(0) to CF(1) or is implicated in proton conduction. This Rhodomonas salina (Cryptomonas salina) protein is ATP synthase subunit delta, chloroplastic.